A 670-amino-acid polypeptide reads, in one-letter code: Alpha-1,4-glucan:maltose-1-phosphate maltosyltransferase (670 aa).

Lysine 262, glutamine 322, and aspartate 357 together coordinate alpha-maltose 1-phosphate. Aspartate 393 acts as the Nucleophile in catalysis. Asparagine 394 serves as a coordination point for alpha-maltose 1-phosphate. Glutamate 422 serves as the catalytic Proton donor. Position 534–535 (534–535 (KY)) interacts with alpha-maltose 1-phosphate.

Belongs to the glycosyl hydrolase 13 family. GlgE subfamily. Homodimer.

The catalysed reaction is alpha-maltose 1-phosphate + [(1-&gt;4)-alpha-D-glucosyl](n) = [(1-&gt;4)-alpha-D-glucosyl](n+2) + phosphate. Functionally, maltosyltransferase that uses maltose 1-phosphate (M1P) as the sugar donor to elongate linear or branched alpha-(1-&gt;4)-glucans. Is involved in a branched alpha-glucan biosynthetic pathway from trehalose, together with TreS, Mak and GlgB. This chain is Alpha-1,4-glucan:maltose-1-phosphate maltosyltransferase, found in Chlorobaculum tepidum (strain ATCC 49652 / DSM 12025 / NBRC 103806 / TLS) (Chlorobium tepidum).